A 213-amino-acid polypeptide reads, in one-letter code: Receptor-binding cancer antigen expressed on SiSo cells (213 aa).

At 1-7 (MAITQFR) the chain is on the extracellular side. The helical; Signal-anchor for type III membrane protein transmembrane segment at 8–27 (LFKVCTCLATVFSFLKRLIC) threads the bilayer. Topologically, residues 28-213 (RSGRGRKLSG…EQNKIGVKLS (186 aa)) are cytoplasmic. Ser36 bears the Phosphoserine mark. Thr41 is subject to Phosphothreonine. Residue Tyr94 is modified to Phosphotyrosine. A coiled-coil region spans residues 163 to 211 (EDAAWQAEEVLRQQKIADREKRAAEQQRKKMEKEAQRLMKKEQNKIGVK). A compositionally biased stretch (basic and acidic residues) spans 179-206 (ADREKRAAEQQRKKMEKEAQRLMKKEQN). The interval 179–213 (ADREKRAAEQQRKKMEKEAQRLMKKEQNKIGVKLS) is disordered.

In terms of assembly, homodimer. In terms of tissue distribution, widely expressed. Expressed in heart, brain, spleen, liver, kidney and testis.

The protein localises to the golgi apparatus membrane. Its function is as follows. May participate in suppression of cell proliferation and induces apoptotic cell death through activation of interleukin-1-beta converting enzyme (ICE)-like proteases. The protein is Receptor-binding cancer antigen expressed on SiSo cells (Ebag9) of Mus musculus (Mouse).